We begin with the raw amino-acid sequence, 187 residues long: Probable chorismate pyruvate-lyase (187 aa).

3 residues coordinate substrate: arginine 77, leucine 115, and glutamate 174.

The protein belongs to the UbiC family.

It localises to the cytoplasm. It catalyses the reaction chorismate = 4-hydroxybenzoate + pyruvate. It participates in cofactor biosynthesis; ubiquinone biosynthesis. Removes the pyruvyl group from chorismate, with concomitant aromatization of the ring, to provide 4-hydroxybenzoate (4HB) for the ubiquinone pathway. This Shewanella sp. (strain ANA-3) protein is Probable chorismate pyruvate-lyase.